We begin with the raw amino-acid sequence, 340 residues long: Ribosomal RNA small subunit methyltransferase C (340 aa).

The protein belongs to the methyltransferase superfamily. RsmC family. In terms of assembly, monomer.

The protein resides in the cytoplasm. The enzyme catalyses guanosine(1207) in 16S rRNA + S-adenosyl-L-methionine = N(2)-methylguanosine(1207) in 16S rRNA + S-adenosyl-L-homocysteine + H(+). In terms of biological role, specifically methylates the guanine in position 1207 of 16S rRNA in the 30S particle. The protein is Ribosomal RNA small subunit methyltransferase C of Vibrio vulnificus (strain CMCP6).